A 772-amino-acid polypeptide reads, in one-letter code: Acylamino-acid-releasing enzyme 2 (772 aa).

Active-site charge relay system residues include serine 617, aspartate 708, and histidine 740.

The protein belongs to the peptidase S9C family. In terms of assembly, homotetramer.

It localises to the cytoplasm. The enzyme catalyses Cleavage of an N-acetyl or N-formyl amino acid from the N-terminus of a polypeptide.. In terms of biological role, catalyzes the hydrolysis of the N-terminal peptide bond of an N-acetylated peptide to generate an N-acetylated amino acid and a peptide with a free N-terminus. In Oryza sativa subsp. japonica (Rice), this protein is Acylamino-acid-releasing enzyme 2.